The following is a 718-amino-acid chain: Peroxisomal bifunctional enzyme (718 aa).

An enoyl-CoA hydratase / isomerase region spans residues 2-280 (ARYELVKRSV…FAQRTAEKWT (279 aa)). Residue Gly-100 coordinates substrate. Positions 281–567 (LPSGAQWNNS…DMVCQQGRFG (287 aa)) are 3-hydroxyacyl-CoA dehydrogenase. Positions 716–718 (SHL) match the Microbody targeting signal motif.

The protein in the N-terminal section; belongs to the enoyl-CoA hydratase/isomerase family. It in the C-terminal section; belongs to the 3-hydroxyacyl-CoA dehydrogenase family. In terms of assembly, monomer.

The protein resides in the peroxisome. It carries out the reaction a (3S)-3-hydroxyacyl-CoA = a (2E)-enoyl-CoA + H2O. The catalysed reaction is a 4-saturated-(3S)-3-hydroxyacyl-CoA = a (3E)-enoyl-CoA + H2O. The enzyme catalyses a (3Z)-enoyl-CoA = a 4-saturated (2E)-enoyl-CoA. It catalyses the reaction a (3E)-enoyl-CoA = a 4-saturated (2E)-enoyl-CoA. It carries out the reaction a (3S)-3-hydroxyacyl-CoA + NAD(+) = a 3-oxoacyl-CoA + NADH + H(+). The catalysed reaction is (2S,3S)-3-hydroxy-2-methylbutanoyl-CoA = (2E)-2-methylbut-2-enoyl-CoA + H2O. The enzyme catalyses (3S)-hydroxyhexadecanoyl-CoA + NAD(+) = 3-oxohexadecanoyl-CoA + NADH + H(+). It catalyses the reaction (3S)-hydroxyhexadecanoyl-CoA = (2E)-hexadecenoyl-CoA + H2O. It carries out the reaction (2E)-hexadecenedioyl-CoA + H2O = (3S)-hydroxyhexadecanedioyl-CoA. The catalysed reaction is (3S)-hydroxyhexadecanedioyl-CoA + NAD(+) = 3-oxohexadecanedioyl-CoA + NADH + H(+). The enzyme catalyses (3E,5Z)-tetradecadienoyl-CoA = (2E,5Z)-tetradecadienoyl-CoA. It catalyses the reaction (3E,5Z)-octadienoyl-CoA = (2E,5Z)-octadienoyl-CoA. It carries out the reaction (3S)-hydroxydecanoyl-CoA + NAD(+) = 3-oxodecanoyl-CoA + NADH + H(+). The catalysed reaction is (3E)-decenoyl-CoA = (2E)-decenoyl-CoA. The enzyme catalyses (3Z)-hexenoyl-CoA = (2E)-hexenoyl-CoA. It catalyses the reaction (3E)-hexenoyl-CoA = (2E)-hexenoyl-CoA. It carries out the reaction (3S)-hydroxydecanoyl-CoA = (2E)-decenoyl-CoA + H2O. The catalysed reaction is (3S)-hydroxyhexanoyl-CoA = (2E)-hexenoyl-CoA + H2O. It participates in lipid metabolism; fatty acid beta-oxidation. Its function is as follows. Peroxisomal trifunctional enzyme possessing 2-enoyl-CoA hydratase, 3-hydroxyacyl-CoA dehydrogenase, and delta 3, delta 2-enoyl-CoA isomerase activities. Catalyzes two of the four reactions of the long straight chain fatty acids peroxisomal beta-oxidation pathway. Can also use branched-chain fatty acids such as 2-methyl-2E-butenoyl-CoA as a substrate, which is hydrated into (2S,3S)-3-hydroxy-2-methylbutanoyl-CoA. Optimal isomerase for 2,5 double bonds into 3,5 form isomerization in a range of enoyl-CoA species. Also able to isomerize both 3-cis and 3-trans double bonds into the 2-trans form in a range of enoyl-CoA species. Regulates the amount of medium-chain dicarboxylic fatty acids which are essential regulators of all fatty acid oxidation pathways. Also involved in the degradation of long-chain dicarboxylic acids through peroxisomal beta-oxidation. In Danio rerio (Zebrafish), this protein is Peroxisomal bifunctional enzyme (ehhadh).